Here is a 248-residue protein sequence, read N- to C-terminus: NADP-dependent 3-hydroxy acid dehydrogenase YdfG (248 aa).

NADP(+) contacts are provided by residues 7-12 (GATAGF), 32-33 (RR), 54-55 (DV), and N81. Residue S134 participates in substrate binding. NADP(+)-binding positions include Y147, K151, and 177 to 185 (PGLVGGTEF). The Proton acceptor role is filled by Y147.

The protein belongs to the short-chain dehydrogenases/reductases (SDR) family. As to quaternary structure, homotetramer.

It catalyses the reaction 3-hydroxypropanoate + NADP(+) = 3-oxopropanoate + NADPH + H(+). It carries out the reaction L-allo-threonine + NADP(+) = aminoacetone + CO2 + NADPH. In terms of biological role, NADP-dependent dehydrogenase with broad substrate specificity acting on 3-hydroxy acids. Catalyzes the NADP-dependent oxidation of L-allo-threonine to L-2-amino-3-keto-butyrate, which is spontaneously decarboxylated into aminoacetone. Also acts on D-threonine, L-serine, D-serine, D-3-hydroxyisobutyrate, L-3-hydroxyisobutyrate, D-glycerate and L-glycerate. Able to catalyze the reduction of the malonic semialdehyde to 3-hydroxypropionic acid. YdfG is apparently supplementing RutE, the presumed malonic semialdehyde reductase involved in pyrimidine degradation since both are able to detoxify malonic semialdehyde. In Escherichia coli O157:H7, this protein is NADP-dependent 3-hydroxy acid dehydrogenase YdfG.